Reading from the N-terminus, the 199-residue chain is Ribosome maturation factor RimP (199 aa).

A disordered region spans residues 165 to 199 (AGNLPPQPEDDEDMLADFEIDESEDEEDPETGDVQ). Positions 172 to 199 (PEDDEDMLADFEIDESEDEEDPETGDVQ) are enriched in acidic residues.

This sequence belongs to the RimP family.

Its subcellular location is the cytoplasm. Functionally, required for maturation of 30S ribosomal subunits. The sequence is that of Ribosome maturation factor RimP from Hyphomonas neptunium (strain ATCC 15444).